Here is a 264-residue protein sequence, read N- to C-terminus: Thymidylate synthase (264 aa).

Arg21 contributes to the dUMP binding site. (6R)-5,10-methylene-5,6,7,8-tetrahydrofolate is bound at residue His51. Residue Arg126–Arg127 participates in dUMP binding. Cys146 (nucleophile) is an active-site residue. DUMP is bound by residues Arg166 to Asp169, Asn177, and His207 to Tyr209. Asp169 contacts (6R)-5,10-methylene-5,6,7,8-tetrahydrofolate. A (6R)-5,10-methylene-5,6,7,8-tetrahydrofolate-binding site is contributed by Ala263.

The protein belongs to the thymidylate synthase family. Bacterial-type ThyA subfamily. As to quaternary structure, homodimer.

The protein resides in the cytoplasm. It catalyses the reaction dUMP + (6R)-5,10-methylene-5,6,7,8-tetrahydrofolate = 7,8-dihydrofolate + dTMP. The protein operates within pyrimidine metabolism; dTTP biosynthesis. Functionally, catalyzes the reductive methylation of 2'-deoxyuridine-5'-monophosphate (dUMP) to 2'-deoxythymidine-5'-monophosphate (dTMP) while utilizing 5,10-methylenetetrahydrofolate (mTHF) as the methyl donor and reductant in the reaction, yielding dihydrofolate (DHF) as a by-product. This enzymatic reaction provides an intracellular de novo source of dTMP, an essential precursor for DNA biosynthesis. The polypeptide is Thymidylate synthase (Coxiella burnetii (strain Dugway 5J108-111)).